A 167-amino-acid chain; its full sequence is Endoribonuclease YbeY (167 aa).

Residues 64–101 (GKPTNVLSWPSEERASEEPGMAPEPPEPGDPEDPEPLG) form a disordered region. The segment covering 90–99 (EPGDPEDPEP) has biased composition (acidic residues). The Zn(2+) site is built by His131, His135, and His141.

This sequence belongs to the endoribonuclease YbeY family. Requires Zn(2+) as cofactor.

It is found in the cytoplasm. In terms of biological role, single strand-specific metallo-endoribonuclease involved in late-stage 70S ribosome quality control and in maturation of the 3' terminus of the 16S rRNA. The protein is Endoribonuclease YbeY of Cereibacter sphaeroides (strain ATCC 17023 / DSM 158 / JCM 6121 / CCUG 31486 / LMG 2827 / NBRC 12203 / NCIMB 8253 / ATH 2.4.1.) (Rhodobacter sphaeroides).